The primary structure comprises 123 residues: Ribosome-binding factor A (123 aa).

Belongs to the RbfA family. Monomer. Binds 30S ribosomal subunits, but not 50S ribosomal subunits or 70S ribosomes.

The protein localises to the cytoplasm. In terms of biological role, one of several proteins that assist in the late maturation steps of the functional core of the 30S ribosomal subunit. Associates with free 30S ribosomal subunits (but not with 30S subunits that are part of 70S ribosomes or polysomes). Required for efficient processing of 16S rRNA. May interact with the 5'-terminal helix region of 16S rRNA. The polypeptide is Ribosome-binding factor A (Chlamydia trachomatis serovar A (strain ATCC VR-571B / DSM 19440 / HAR-13)).